The sequence spans 182 residues: Adenylate kinase (182 aa).

An ATP-binding site is contributed by 12 to 17 (GAGKGT). Residues 32-61 (STGELLRKEIDLDTYLGKQVKDIMNKGELV) are NMP. AMP-binding positions include T33, R38, 59–61 (ELV), 85–88 (GYPR), and Q92. The interval 126–132 (LRGRKDD) is LID. An ATP-binding site is contributed by R127. Residues R129 and R140 each coordinate AMP. An ATP-binding site is contributed by G168.

Belongs to the adenylate kinase family. Monomer.

It localises to the cytoplasm. The enzyme catalyses AMP + ATP = 2 ADP. Its pathway is purine metabolism; AMP biosynthesis via salvage pathway; AMP from ADP: step 1/1. Catalyzes the reversible transfer of the terminal phosphate group between ATP and AMP. Plays an important role in cellular energy homeostasis and in adenine nucleotide metabolism. This is Adenylate kinase from Prochlorococcus marinus (strain MIT 9515).